Here is a 190-residue protein sequence, read N- to C-terminus: Adenylate kinase (190 aa).

12–17 (GSGKTT) lines the ATP pocket. The interval 33–62 (STGDLLRAEVASGSELGKTIDSFISKGNLV) is NMP. AMP contacts are provided by residues Thr-34, Arg-39, 60 to 62 (NLV), 87 to 90 (GYPR), and Gln-94. Residues 129–135 (GRARGAD) are LID. Arg-130 provides a ligand contact to ATP. AMP-binding residues include Arg-132 and Arg-144. Arg-172 provides a ligand contact to ATP.

It belongs to the adenylate kinase family. Monomer.

The protein localises to the cytoplasm. It catalyses the reaction AMP + ATP = 2 ADP. The protein operates within purine metabolism; AMP biosynthesis via salvage pathway; AMP from ADP: step 1/1. Functionally, catalyzes the reversible transfer of the terminal phosphate group between ATP and AMP. Plays an important role in cellular energy homeostasis and in adenine nucleotide metabolism. This Campylobacter lari (strain RM2100 / D67 / ATCC BAA-1060) protein is Adenylate kinase.